Consider the following 486-residue polypeptide: Ribosomal RNA small subunit methyltransferase F (486 aa).

Residues 124–130 (ASAPGSK), Glu-148, Asp-175, and Asp-193 each bind S-adenosyl-L-methionine. Cys-246 (nucleophile) is an active-site residue.

It belongs to the class I-like SAM-binding methyltransferase superfamily. RsmB/NOP family.

It localises to the cytoplasm. The enzyme catalyses cytidine(1407) in 16S rRNA + S-adenosyl-L-methionine = 5-methylcytidine(1407) in 16S rRNA + S-adenosyl-L-homocysteine + H(+). In terms of biological role, specifically methylates the cytosine at position 1407 (m5C1407) of 16S rRNA. This chain is Ribosomal RNA small subunit methyltransferase F, found in Shewanella baltica (strain OS195).